Reading from the N-terminus, the 145-residue chain is Ribosome-binding factor A (145 aa).

Residues 1–10 (MKRPSSHGRR) show a composition bias toward basic residues. 2 disordered regions span residues 1–21 (MKRP…RQLR) and 124–145 (DDPK…KDED).

Belongs to the RbfA family. Monomer. Binds 30S ribosomal subunits, but not 50S ribosomal subunits or 70S ribosomes.

It is found in the cytoplasm. Functionally, one of several proteins that assist in the late maturation steps of the functional core of the 30S ribosomal subunit. Associates with free 30S ribosomal subunits (but not with 30S subunits that are part of 70S ribosomes or polysomes). Required for efficient processing of 16S rRNA. May interact with the 5'-terminal helix region of 16S rRNA. The chain is Ribosome-binding factor A from Phenylobacterium zucineum (strain HLK1).